Here is a 637-residue protein sequence, read N- to C-terminus: Probable ATP-binding protein YheS (637 aa).

2 ABC transporter domains span residues 2–246 and 313–527; these read IVFS…AQQQ and LKME…KQEN. ATP-binding positions include 34–41 and 345–352; these read GKNGCGKS and GRNGAGKS. The tract at residues 523–559 is disordered; sequence QKQENQTDEAPKENANSAQARKDQKRREAELRAQTQP. The segment covering 542–553 has biased composition (basic and acidic residues); the sequence is ARKDQKRREAEL.

It belongs to the ABC transporter superfamily. ABCF family. YheS subfamily.

Functionally, genetic data indicate it may be involved in ribosome assembly or function. Ectopic expression exacerbates the cold-sensitive growth phenotype of a bipA deletion. This chain is Probable ATP-binding protein YheS (yheS), found in Escherichia coli O6:H1 (strain CFT073 / ATCC 700928 / UPEC).